The primary structure comprises 197 residues: Imidazoleglycerol-phosphate dehydratase (197 aa).

Belongs to the imidazoleglycerol-phosphate dehydratase family.

The protein localises to the cytoplasm. The enzyme catalyses D-erythro-1-(imidazol-4-yl)glycerol 3-phosphate = 3-(imidazol-4-yl)-2-oxopropyl phosphate + H2O. The protein operates within amino-acid biosynthesis; L-histidine biosynthesis; L-histidine from 5-phospho-alpha-D-ribose 1-diphosphate: step 6/9. The chain is Imidazoleglycerol-phosphate dehydratase from Pseudomonas fluorescens (strain SBW25).